The chain runs to 64 residues: Translational regulator CsrA (64 aa).

This sequence belongs to the CsrA/RsmA family. In terms of assembly, homodimer; the beta-strands of each monomer intercalate to form a hydrophobic core, while the alpha-helices form wings that extend away from the core.

Its subcellular location is the cytoplasm. A key translational regulator that binds mRNA to regulate translation initiation and/or mRNA stability. Mediates global changes in gene expression, shifting from rapid growth to stress survival by linking envelope stress, the stringent response and the catabolite repression systems. Usually binds in the 5'-UTR; binding at or near the Shine-Dalgarno sequence prevents ribosome-binding, repressing translation, binding elsewhere in the 5'-UTR can activate translation and/or stabilize the mRNA. Its function is antagonized by small RNA(s). The sequence is that of Translational regulator CsrA from Actinobacillus pleuropneumoniae serotype 5b (strain L20).